Here is a 371-residue protein sequence, read N- to C-terminus: Putative glutamate--cysteine ligase 2 (371 aa).

Belongs to the glutamate--cysteine ligase type 2 family. YbdK subfamily.

The enzyme catalyses L-cysteine + L-glutamate + ATP = gamma-L-glutamyl-L-cysteine + ADP + phosphate + H(+). In terms of biological role, ATP-dependent carboxylate-amine ligase which exhibits weak glutamate--cysteine ligase activity. In Burkholderia lata (strain ATCC 17760 / DSM 23089 / LMG 22485 / NCIMB 9086 / R18194 / 383), this protein is Putative glutamate--cysteine ligase 2.